Reading from the N-terminus, the 123-residue chain is Ribosome-binding factor A (123 aa).

Belongs to the RbfA family. In terms of assembly, monomer. Binds 30S ribosomal subunits, but not 50S ribosomal subunits or 70S ribosomes.

It localises to the cytoplasm. One of several proteins that assist in the late maturation steps of the functional core of the 30S ribosomal subunit. Associates with free 30S ribosomal subunits (but not with 30S subunits that are part of 70S ribosomes or polysomes). Required for efficient processing of 16S rRNA. May interact with the 5'-terminal helix region of 16S rRNA. This Neisseria meningitidis serogroup A / serotype 4A (strain DSM 15465 / Z2491) protein is Ribosome-binding factor A.